Reading from the N-terminus, the 162-residue chain is Neuritin-like protein (162 aa).

The first 32 residues, 1-32 (MMCNCCHCHWRRRCQRLPCALTLLLLLPLAVA), serve as a signal peptide directing secretion. A136 carries the GPI-anchor amidated alanine lipid modification. Residues 137–162 (PALAPAPAPVLLAAALALACLLGPLA) constitute a propeptide, removed in mature form.

The protein belongs to the neuritin family.

It localises to the cell membrane. In Mus musculus (Mouse), this protein is Neuritin-like protein (Nrn1l).